The primary structure comprises 375 residues: N-acetylneuraminate epimerase (375 aa).

An N-terminal signal peptide occupies residues 1 to 22 (MKLTKTALCTALFATFTFSANA). Kelch repeat units follow at residues 43–87 (TVYV…AAVD), 89–140 (KLYV…ASHG), 142–176 (KVYI…EIVA), 177–222 (AYFD…TIQG), 225–273 (LVVV…LAGA), 295–344 (KQFK…SYNN), and 346–375 (VLLI…LTVE). The active-site Proton acceptor is the Glu-231.

It belongs to the NanM family. As to quaternary structure, homodimer.

The protein resides in the periplasm. It carries out the reaction N-acetyl-alpha-neuraminate = N-acetyl-beta-neuraminate. Its function is as follows. Converts alpha-N-acetylneuranimic acid (Neu5Ac) to the beta-anomer, accelerating the equilibrium between the alpha- and beta-anomers. Probably facilitates sialidase-negative bacteria to compete successfully for limited amounts of extracellular Neu5Ac, which is likely taken up in the beta-anomer. In addition, the rapid removal of sialic acid from solution might be advantageous to the bacterium to damp down host responses. The polypeptide is N-acetylneuraminate epimerase (Haemophilus influenzae (strain 86-028NP)).